Consider the following 300-residue polypeptide: MKIAILSRDGTLYSCKRLREAAMKRGHLVEILDPLSCYMNISPAASSIHYKGRQLPHFDAVIPRIGSAITFYGTAALRQFEMLGSYPLNESVAITRARDKLRSLQLLARQGIDLPVTGIAHSPDDTSDLIDMVGGAPLVVKLVEGTQGIGVVLAETRQAAESVIDAFRGLNAHILVQEYIKEARGRDIRCLVVGDEVVAAIERRAKEGDFRSNLHRGGMASIASITPREREIAIKAAQTMGLDVAGVDILRAERGPLVMEVNASPGLEGVEKTTGVDIAGRMIQWIERHATPEFCLKTGG.

The 184-residue stretch at 104–287 (LQLLARQGID…IAGRMIQWIE (184 aa)) folds into the ATP-grasp domain. ATP contacts are provided by residues Lys-141, 178–179 (EY), Asp-187, and 211–213 (RSN). Residues Asp-248, Glu-260, and Asn-262 each contribute to the Mg(2+) site. Mn(2+) is bound by residues Asp-248, Glu-260, and Asn-262.

Belongs to the RimK family. It depends on Mg(2+) as a cofactor. Requires Mn(2+) as cofactor.

The chain is Probable alpha-L-glutamate ligase from Citrobacter koseri (strain ATCC BAA-895 / CDC 4225-83 / SGSC4696).